Consider the following 689-residue polypeptide: Methionine--tRNA ligase (689 aa).

A 'HIGH' region motif is present at residues 19-29 (PYPTGDLHIGH). Cysteine 150, cysteine 153, cysteine 162, and cysteine 166 together coordinate Zn(2+). Positions 338–342 (GLSTS) match the 'KMSKS' region motif. ATP is bound at residue threonine 341. A tRNA-binding domain is found at 591-689 (EFQALDLRVG…EDSEPGTKVM (99 aa)).

This sequence belongs to the class-I aminoacyl-tRNA synthetase family. MetG type 1 subfamily. Homodimer. Zn(2+) serves as cofactor.

The protein localises to the cytoplasm. It carries out the reaction tRNA(Met) + L-methionine + ATP = L-methionyl-tRNA(Met) + AMP + diphosphate. In terms of biological role, is required not only for elongation of protein synthesis but also for the initiation of all mRNA translation through initiator tRNA(fMet) aminoacylation. The polypeptide is Methionine--tRNA ligase (Halobacterium salinarum (strain ATCC 700922 / JCM 11081 / NRC-1) (Halobacterium halobium)).